The sequence spans 49 residues: Large ribosomal subunit protein bL33 (49 aa).

It belongs to the bacterial ribosomal protein bL33 family.

The polypeptide is Large ribosomal subunit protein bL33 (Syntrophus aciditrophicus (strain SB)).